Consider the following 315-residue polypeptide: Glutamyl-Q tRNA(Asp) synthetase (315 aa).

Residues R23–S27 and E59 contribute to the L-glutamate site. The 'HIGH' region signature appears at P26–S36. Zn(2+) contacts are provided by C115, C117, Y142, and C146. L-glutamate-binding residues include Y202 and R220. Residues K258–Q262 carry the 'KMSKS' region motif. ATP is bound at residue K261.

The protein belongs to the class-I aminoacyl-tRNA synthetase family. GluQ subfamily. The cofactor is Zn(2+).

Functionally, catalyzes the tRNA-independent activation of glutamate in presence of ATP and the subsequent transfer of glutamate onto a tRNA(Asp). Glutamate is transferred on the 2-amino-5-(4,5-dihydroxy-2-cyclopenten-1-yl) moiety of the queuosine in the wobble position of the QUC anticodon. The polypeptide is Glutamyl-Q tRNA(Asp) synthetase (Ralstonia nicotianae (strain ATCC BAA-1114 / GMI1000) (Ralstonia solanacearum)).